The sequence spans 668 residues: Kinesin-like protein KIF2B (668 aa).

Threonine 125 bears the Phosphothreonine; by PLK1 mark. A coiled-coil region spans residues 149–177 (CLREIEKLQKQREKRRRLQLEIRARRALD). Residue serine 204 is modified to Phosphoserine; by PLK1. The 331-residue stretch at 213–543 (RICVCVRKRP…LRYANRVKEL (331 aa)) folds into the Kinesin motor domain. 303–310 (GQTGSGKT) provides a ligand contact to ATP. Positions 585–604 (PTVEKEEEKESDELTSKKEP) are enriched in basic and acidic residues. Residues 585–605 (PTVEKEEEKESDELTSKKEPA) form a disordered region. A coiled-coil region spans residues 646–667 (VLTDIQKKLQSLREDLQKKSQV).

This sequence belongs to the TRAFAC class myosin-kinesin ATPase superfamily. Kinesin family. MCAK/KIF2 subfamily. In terms of processing, phosphorylation at Thr-125 by PLK1 is required for activity in the correction of kinetochore-microtubules attachment errors, while phosphorylation at Ser-204 also by PLK1 is required for the kinetochore localization and activity in prometaphase.

Its subcellular location is the cytoplasm. The protein resides in the cytoskeleton. The protein localises to the microtubule organizing center. It is found in the centrosome. It localises to the spindle. Its subcellular location is the chromosome. The protein resides in the centromere. The protein localises to the kinetochore. Plus end-directed microtubule-dependent motor required for spindle assembly and chromosome movement during mitosis. Has microtubule depolymerization activity. Plays a role in chromosome congression. The sequence is that of Kinesin-like protein KIF2B (Kif2b) from Mus musculus (Mouse).